We begin with the raw amino-acid sequence, 486 residues long: UDP-N-acetylmuramate--L-alanine ligase (486 aa).

Residue G129–T135 participates in ATP binding.

The protein belongs to the MurCDEF family.

It is found in the cytoplasm. It catalyses the reaction UDP-N-acetyl-alpha-D-muramate + L-alanine + ATP = UDP-N-acetyl-alpha-D-muramoyl-L-alanine + ADP + phosphate + H(+). The protein operates within cell wall biogenesis; peptidoglycan biosynthesis. In terms of biological role, cell wall formation. The chain is UDP-N-acetylmuramate--L-alanine ligase from Vibrio atlanticus (strain LGP32) (Vibrio splendidus (strain Mel32)).